The chain runs to 274 residues: Type III pantothenate kinase (274 aa).

6–13 (DVGNTNTV) contributes to the ATP binding site. Substrate-binding positions include Y110 and 117–120 (GADR). D119 acts as the Proton acceptor in catalysis. D139 serves as a coordination point for K(+). An ATP-binding site is contributed by T142. T194 lines the substrate pocket.

The protein belongs to the type III pantothenate kinase family. In terms of assembly, homodimer. NH4(+) is required as a cofactor. The cofactor is K(+).

Its subcellular location is the cytoplasm. The catalysed reaction is (R)-pantothenate + ATP = (R)-4'-phosphopantothenate + ADP + H(+). It functions in the pathway cofactor biosynthesis; coenzyme A biosynthesis; CoA from (R)-pantothenate: step 1/5. In terms of biological role, catalyzes the phosphorylation of pantothenate (Pan), the first step in CoA biosynthesis. This is Type III pantothenate kinase from Koribacter versatilis (strain Ellin345).